A 365-amino-acid polypeptide reads, in one-letter code: Iron-sulfur cluster assembly protein SufC (365 aa).

Residues 118 to 364 (LEINDLHAIE…ESDGYAQFVE (247 aa)) enclose the ABC transporter domain. Residue 152 to 159 (GRNGSGKS) participates in ATP binding.

The protein belongs to the ABC transporter superfamily. Ycf16 family. As to quaternary structure, component of a complex composed of SufB, SufC and SufD in a stoichiometric ratio of 1:2:1. Interacts with SufB. Interacts with SufD; the interaction enhances the ATPase activity of SufC.

It localises to the plastid. It is found in the apicoplast. The catalysed reaction is ATP + H2O = ADP + phosphate + H(+). Its pathway is cofactor biosynthesis; iron-sulfur cluster biosynthesis. Participates in the sulfur mobilization (SUF) pathway for iron-sulfur (Fe-S) cluster biogenesis. As part of a complex consisting of SufB-SufC(2)-SufD, involved in assembly of [4Fe-4S] clusters. Exhibits ATPase activity. This Plasmodium berghei (strain Anka) protein is Iron-sulfur cluster assembly protein SufC.